The sequence spans 278 residues: Transmembrane protein 41A-B (278 aa).

The first 23 residues, Met1 to Ala23, serve as a signal peptide directing secretion. 5 helical membrane passes run Gly78 to Gly98, Phe101 to Thr121, Leu164 to Val184, Ile191 to Cys211, and Trp230 to Ile250.

This sequence belongs to the TMEM41 family.

The protein resides in the membrane. This chain is Transmembrane protein 41A-B, found in Danio rerio (Zebrafish).